A 383-amino-acid chain; its full sequence is MKNILPPFIEIYRALIATPSISATEESLDQSNASLITLLAGWFSDLGFNVEVQPVPGTRNKFNMLASTGHGAGGLLLTGHTDTVPFDDGRWTRDPFTLTEHDNKLYGLGTADMKGFFAFILDALRDVDVTKLKKPLYILATADEETSMAGARYFSETTALRPDCAIIGEPTSLQPIRAHKGHISNVVRVLGQSGHSSDPARGVNAIELMHDAIGHIMQLRDSLKARYHYEAFTVPYPTLNLGHIHGGDASNRICACCELHMDIRPLPGMTLNDLNGLLNDALAPVSERWPGRLTVAELHPPIPGYECPPDHQLVEVVEKLLGTKTDVVNYCTEAPFMQTLCPTLVLGPGSINQAHQPDEYLETRFIKPTRELITQVVHHFCWH.

His-80 is a Zn(2+) binding site. Asp-82 is an active-site residue. Asp-112 lines the Zn(2+) pocket. Glu-144 is a catalytic residue. The Zn(2+) site is built by Glu-145, Glu-169, and His-355.

This sequence belongs to the peptidase M20A family. ArgE subfamily. Homodimer. It depends on Zn(2+) as a cofactor. Co(2+) is required as a cofactor. The cofactor is glutathione.

It localises to the cytoplasm. It carries out the reaction N(2)-acetyl-L-ornithine + H2O = L-ornithine + acetate. Its pathway is amino-acid biosynthesis; L-arginine biosynthesis; L-ornithine from N(2)-acetyl-L-ornithine (linear): step 1/1. In terms of biological role, catalyzes the hydrolysis of the amide bond of N(2)-acetylated L-amino acids. Cleaves the acetyl group from N-acetyl-L-ornithine to form L-ornithine, an intermediate in L-arginine biosynthesis pathway, and a branchpoint in the synthesis of polyamines. In Salmonella agona (strain SL483), this protein is Acetylornithine deacetylase.